Reading from the N-terminus, the 261-residue chain is Chitinase 8 (261 aa).

The N-terminal stretch at 1 to 29 (MTTTTTRFVQLAACAAASLLAVAASGAAA) is a signal peptide. 2 cysteine pairs are disulfide-bonded: cysteine 53–cysteine 115 and cysteine 221–cysteine 253. Glutamate 98 serves as the catalytic Proton donor.

Belongs to the glycosyl hydrolase 19 family. Chitinase class II subfamily. As to expression, expressed in roots, leaves, sheaths and meristems.

It carries out the reaction Random endo-hydrolysis of N-acetyl-beta-D-glucosaminide (1-&gt;4)-beta-linkages in chitin and chitodextrins.. The protein is Chitinase 8 (Cht8) of Oryza sativa subsp. japonica (Rice).